A 435-amino-acid polypeptide reads, in one-letter code: NADH-quinone oxidoreductase subunit D 2 (435 aa).

The protein belongs to the complex I 49 kDa subunit family. As to quaternary structure, NDH-1 is composed of 14 different subunits. Subunits NuoB, C, D, E, F, and G constitute the peripheral sector of the complex.

Its subcellular location is the cell inner membrane. The catalysed reaction is a quinone + NADH + 5 H(+)(in) = a quinol + NAD(+) + 4 H(+)(out). Functionally, NDH-1 shuttles electrons from NADH, via FMN and iron-sulfur (Fe-S) centers, to quinones in the respiratory chain. The immediate electron acceptor for the enzyme in this species is believed to be ubiquinone. Couples the redox reaction to proton translocation (for every two electrons transferred, four hydrogen ions are translocated across the cytoplasmic membrane), and thus conserves the redox energy in a proton gradient. The chain is NADH-quinone oxidoreductase subunit D 2 from Stenotrophomonas maltophilia (strain R551-3).